Reading from the N-terminus, the 508-residue chain is ATP synthase subunit alpha, chloroplastic (508 aa).

An ATP-binding site is contributed by 171 to 178; that stretch reads GDRQTGKT.

Belongs to the ATPase alpha/beta chains family. As to quaternary structure, F-type ATPases have 2 components, CF(1) - the catalytic core - and CF(0) - the membrane proton channel. CF(1) has five subunits: alpha(3), beta(3), gamma(1), delta(1), epsilon(1). CF(0) has four main subunits: a, b, b' and c.

It is found in the plastid. Its subcellular location is the chloroplast thylakoid membrane. The enzyme catalyses ATP + H2O + 4 H(+)(in) = ADP + phosphate + 5 H(+)(out). Functionally, produces ATP from ADP in the presence of a proton gradient across the membrane. The alpha chain is a regulatory subunit. This Gnetum parvifolium (Small-leaved jointfir) protein is ATP synthase subunit alpha, chloroplastic.